We begin with the raw amino-acid sequence, 394 residues long: Phosphoglycerate kinase (394 aa).

Residues 21 to 23 (DFN), R36, 59 to 62 (HLGR), R118, and R151 each bind substrate. Phosphoserine is present on S183. K201 contributes to the ATP binding site. The residue at position 299 (T299) is a Phosphothreonine. ATP is bound by residues E323 and 350–353 (GGDS).

Belongs to the phosphoglycerate kinase family. In terms of assembly, monomer.

It localises to the cytoplasm. It catalyses the reaction (2R)-3-phosphoglycerate + ATP = (2R)-3-phospho-glyceroyl phosphate + ADP. The protein operates within carbohydrate degradation; glycolysis; pyruvate from D-glyceraldehyde 3-phosphate: step 2/5. This Shouchella clausii (strain KSM-K16) (Alkalihalobacillus clausii) protein is Phosphoglycerate kinase.